We begin with the raw amino-acid sequence, 209 residues long: Large ribosomal subunit protein uL3 (209 aa).

Residues Gly-121–Thr-154 are disordered.

Belongs to the universal ribosomal protein uL3 family. As to quaternary structure, part of the 50S ribosomal subunit. Forms a cluster with proteins L14 and L19.

Its function is as follows. One of the primary rRNA binding proteins, it binds directly near the 3'-end of the 23S rRNA, where it nucleates assembly of the 50S subunit. This is Large ribosomal subunit protein uL3 from Desulforamulus reducens (strain ATCC BAA-1160 / DSM 100696 / MI-1) (Desulfotomaculum reducens).